A 322-amino-acid polypeptide reads, in one-letter code: GDSL esterase/lipase At2g04020 (322 aa).

Positions M1–S26 are cleaved as a signal peptide. The active-site Nucleophile is S50. N260 carries N-linked (GlcNAc...) asparagine glycosylation. Active-site residues include D296 and H299.

The protein belongs to the 'GDSL' lipolytic enzyme family.

Its subcellular location is the secreted. This is GDSL esterase/lipase At2g04020 from Arabidopsis thaliana (Mouse-ear cress).